We begin with the raw amino-acid sequence, 222 residues long: Large ribosomal subunit protein bL20 (222 aa).

The protein belongs to the bacterial ribosomal protein bL20 family.

Binds directly to 23S ribosomal RNA and is necessary for the in vitro assembly process of the 50S ribosomal subunit. It is not involved in the protein synthesizing functions of that subunit. This Paenarthrobacter aurescens (strain TC1) protein is Large ribosomal subunit protein bL20 (rplT).